We begin with the raw amino-acid sequence, 549 residues long: Glucose-6-phosphate isomerase (549 aa).

Residue E355 is the Proton donor of the active site. Residues H386 and K514 contribute to the active site.

Belongs to the GPI family.

It is found in the cytoplasm. The catalysed reaction is alpha-D-glucose 6-phosphate = beta-D-fructose 6-phosphate. Its pathway is carbohydrate biosynthesis; gluconeogenesis. The protein operates within carbohydrate degradation; glycolysis; D-glyceraldehyde 3-phosphate and glycerone phosphate from D-glucose: step 2/4. Functionally, catalyzes the reversible isomerization of glucose-6-phosphate to fructose-6-phosphate. The protein is Glucose-6-phosphate isomerase of Sodalis glossinidius (strain morsitans).